A 512-amino-acid polypeptide reads, in one-letter code: Norfluorocurarine oxidase (512 aa).

The helical transmembrane segment at 3-23 (LLLNPSLFSLLPLLLFIIFLF) threads the bilayer. A heme-binding site is contributed by C453.

The protein belongs to the cytochrome P450 family. Heme is required as a cofactor.

The protein resides in the membrane. It carries out the reaction norfluorocurarine + reduced [NADPH--hemoprotein reductase] + O2 = 18-hydroxynorfluorocurarine + oxidized [NADPH--hemoprotein reductase] + H2O + H(+). Its pathway is alkaloid biosynthesis. Functionally, monooxygenase involved in the biosynthesis of curare monoterpene indole alkaloids (MIAs), natural products such as diaboline, a pharmacologically active compound used to regulate blood pressure. Curare alkaloids act as animal glycine receptor antagonists. Catalyzes the conversion of norfluorocurarine to 18-OH norfluorocurarine. This chain is Norfluorocurarine oxidase, found in Strychnos sp.